A 28-amino-acid chain; its full sequence is GLLDTIKGVAKTVAASMLDKLKCKISGC.

Cys-23 and Cys-28 are oxidised to a cystine.

Expressed by the skin glands.

Its subcellular location is the secreted. Functionally, antibacterial activity against Gram-positive bacterium S.aureus and Gram-negative bacterium E.coli. Has activity against C.albicans. This chain is Ranatuerin-2B, found in Lithobates berlandieri (Rio Grande leopard frog).